The chain runs to 474 residues: Phenolic acid decarboxylase (474 aa).

Mn(2+)-binding residues include Asn161, His182, and Glu224. Residues 161 to 166 and 181 to 182 contribute to the prenylated FMN site; these read NVGTYR and MH. Glu273 acts as the Proton donor in catalysis.

It belongs to the UbiD family. YclC subfamily. Requires prenylated FMN as cofactor. Mn(2+) is required as a cofactor.

The enzyme catalyses vanillate + H(+) = guaiacol + CO2. Its function is as follows. Involved in the non-oxidative decarboxylation and detoxification of phenolic derivatives under both aerobic and anaerobic conditions. Phenolic acid decarboxylase that catalyzes the reversible decarboxylation of vanillate. The polypeptide is Phenolic acid decarboxylase (Streptomyces sp. (strain D7)).